The chain runs to 360 residues: Phospho-N-acetylmuramoyl-pentapeptide-transferase (360 aa).

10 helical membrane passes run 26–46 (SIMA…KVIN), 73–93 (TMGG…WADL), 98–118 (VWFT…DDYW), 132–152 (WKYF…YAMG), 168–188 (VMPQ…VGTS), 199–219 (GLAI…AWAT), 236–256 (SGEL…FLWY), 263–283 (VFMG…IAVL), 288–308 (LLLL…ILQV), and 338–358 (VIVR…VTLK).

The protein belongs to the glycosyltransferase 4 family. MraY subfamily. Mg(2+) is required as a cofactor.

The protein localises to the cell inner membrane. The catalysed reaction is UDP-N-acetyl-alpha-D-muramoyl-L-alanyl-gamma-D-glutamyl-meso-2,6-diaminopimeloyl-D-alanyl-D-alanine + di-trans,octa-cis-undecaprenyl phosphate = di-trans,octa-cis-undecaprenyl diphospho-N-acetyl-alpha-D-muramoyl-L-alanyl-D-glutamyl-meso-2,6-diaminopimeloyl-D-alanyl-D-alanine + UMP. The protein operates within cell wall biogenesis; peptidoglycan biosynthesis. Functionally, catalyzes the initial step of the lipid cycle reactions in the biosynthesis of the cell wall peptidoglycan: transfers peptidoglycan precursor phospho-MurNAc-pentapeptide from UDP-MurNAc-pentapeptide onto the lipid carrier undecaprenyl phosphate, yielding undecaprenyl-pyrophosphoryl-MurNAc-pentapeptide, known as lipid I. The protein is Phospho-N-acetylmuramoyl-pentapeptide-transferase of Haemophilus ducreyi (strain 35000HP / ATCC 700724).